We begin with the raw amino-acid sequence, 215 residues long: Serine acetyltransferase (215 aa).

The protein belongs to the transferase hexapeptide repeat family.

It is found in the cytoplasm. The enzyme catalyses L-serine + acetyl-CoA = O-acetyl-L-serine + CoA. The protein operates within amino-acid biosynthesis; L-cysteine biosynthesis; L-cysteine from L-serine: step 1/2. This is Serine acetyltransferase (cysE) from Staphylococcus aureus (strain MRSA252).